Consider the following 341-residue polypeptide: L-threonine 3-dehydrogenase (341 aa).

Residue cysteine 38 participates in Zn(2+) binding. Catalysis depends on charge relay system residues threonine 40 and histidine 43. Histidine 63, glutamate 64, cysteine 93, cysteine 96, cysteine 99, and cysteine 107 together coordinate Zn(2+). Residues isoleucine 175, aspartate 195, arginine 200, 262–264, and 286–287 each bind NAD(+); these read LGI and IY.

The protein belongs to the zinc-containing alcohol dehydrogenase family. Homotetramer. It depends on Zn(2+) as a cofactor.

The protein localises to the cytoplasm. The enzyme catalyses L-threonine + NAD(+) = (2S)-2-amino-3-oxobutanoate + NADH + H(+). Its pathway is amino-acid degradation; L-threonine degradation via oxydo-reductase pathway; glycine from L-threonine: step 1/2. Its function is as follows. Catalyzes the NAD(+)-dependent oxidation of L-threonine to 2-amino-3-ketobutyrate. The sequence is that of L-threonine 3-dehydrogenase from Shewanella sp. (strain MR-7).